The primary structure comprises 154 residues: Cold shock domain-containing protein C2 (154 aa).

S19 carries the phosphoserine modification. A disordered region spans residues 38–62; that stretch reads GGGIAPRDLPSPLPTKRTRTYSATA. Residues 69–136 form the CSD domain; sequence VFKGVCKQFS…KFQAVEVVLT (68 aa).

It localises to the nucleus. Its subcellular location is the cytoplasm. In terms of biological role, RNA-binding factor which binds specifically to the very 3'-UTR ends of both histone H1 and H3.3 mRNAs, encompassing the polyadenylation signal. Might play a central role in the negative regulation of histone variant synthesis in the developing brain. The protein is Cold shock domain-containing protein C2 (Csdc2) of Mus musculus (Mouse).